A 763-amino-acid chain; its full sequence is MAP7 domain-containing protein 2 (763 aa).

Over residues 1 to 11 (MERSGGNGAGA) the composition is skewed to gly residues. Disordered regions lie at residues 1–72 (MERS…REKC), 102–127 (LEEQRQREDQKRAAVEEKRKQKLREE), and 140–531 (ERTQ…KAMI). The span at 12–31 (RAGAPSEGAAKGSSLLSAKS) shows a compositional bias: low complexity. Basic and acidic residues predominate over residues 53–72 (LKSDERQRLAKERREEREKC). Polar residues-rich tracts occupy residues 184-212 (PSDTGTATAAAESTNACDKLSTSTMNLPK) and 241-251 (LKSSYKSSPTR). Residues 312–321 (KRSSSPVKSK) show a composition bias toward low complexity. Composition is skewed to basic and acidic residues over residues 354 to 372 (ETLKKKAEKEKSNKEKEGA), 381 to 420 (PREETLEKPMADKDATEKYVADKHATEKHSATGGKAEHSA), and 437 to 531 (LAEK…KAMI). Residues 434–575 (AKILAEKRRQ…QERLERKKRI (142 aa)) adopt a coiled-coil conformation.

The protein belongs to the MAP7 family. Interacts (via N-terminus) with microtubules; facilitates microtubule stabilization. Interacts with kinesin-1 family members, KIF5A, KIF5B and KIF5C. Detected only in the brain and testis (at the protein level).

It is found in the cytoplasm. It localises to the cytoskeleton. Its subcellular location is the microtubule organizing center. The protein resides in the centrosome. The protein localises to the cell projection. It is found in the axon. In terms of biological role, microtubule-stabilizing protein involved in the control of cell motility and neurite outgrowth. Acts as a critical cofactor for kinesin transport; in the proximal axon regulates kinesin-1 family members, KIF5A, KIF5B and KIF5C recruitment to microtubules and contributes to kinesin-1-mediated transport in the axons. This is MAP7 domain-containing protein 2 (Map7d2) from Rattus norvegicus (Rat).